The primary structure comprises 344 residues: N-acetyl-gamma-glutamyl-phosphate reductase (344 aa).

The active site involves cysteine 150.

This sequence belongs to the NAGSA dehydrogenase family. Type 1 subfamily.

It is found in the cytoplasm. The catalysed reaction is N-acetyl-L-glutamate 5-semialdehyde + phosphate + NADP(+) = N-acetyl-L-glutamyl 5-phosphate + NADPH + H(+). It functions in the pathway amino-acid biosynthesis; L-arginine biosynthesis; N(2)-acetyl-L-ornithine from L-glutamate: step 3/4. Catalyzes the NADPH-dependent reduction of N-acetyl-5-glutamyl phosphate to yield N-acetyl-L-glutamate 5-semialdehyde. This chain is N-acetyl-gamma-glutamyl-phosphate reductase, found in Pseudomonas aeruginosa (strain UCBPP-PA14).